The chain runs to 663 residues: Beta-galactosidase BgaH (663 aa).

Residue Arg103 coordinates substrate. Zn(2+) is bound at residue Cys107. Residue Asn141 coordinates substrate. Residue Glu142 is the Proton donor of the active site. Residues Cys151, Cys153, and Cys156 each coordinate Zn(2+). Catalysis depends on Glu311, which acts as the Nucleophile. Substrate is bound by residues Trp319 and 359 to 362 (EQYH).

Belongs to the glycosyl hydrolase 42 family. Homodimer.

It carries out the reaction Hydrolysis of terminal non-reducing beta-D-galactose residues in beta-D-galactosides.. Its activity is regulated as follows. Requires 4 M NaCl for maximal activity. Loss of activity if DTT or beta-mercaptoethanol is omitted from buffers. Addition of 5-20 mM EDTA, 1 mM Cu(2+) or 1 mM Zn(2+) results in loss of activity. Functionally, when overexpressed, cleaves several different substrates including o-nitrophenyl-beta-D-galactopyranoside (ONPG), chromogen 5-bromo-4-chloro-3-indolyl-beta-D-galactopyranoside (X-Gal) and lactulose, but not lactose. Also has beta-D-fucosidase activity. No beta-L-fucosidase, beta-glucosidase, beta-arabinosidase or beta-xylosidase activity. This is Beta-galactosidase BgaH from Haloferax lucentense (strain DSM 14919 / JCM 9276 / NCIMB 13854 / Aa 2.2) (Haloferax alicantei).